Reading from the N-terminus, the 231-residue chain is 5'-methylthioadenosine/S-adenosylhomocysteine nucleosidase (231 aa).

Glu12 (proton acceptor) is an active-site residue. Residues Gly78, Met153, and 174–175 each bind substrate; that span reads ME. Asp198 functions as the Proton donor in the catalytic mechanism.

This sequence belongs to the PNP/UDP phosphorylase family. MtnN subfamily.

The enzyme catalyses S-adenosyl-L-homocysteine + H2O = S-(5-deoxy-D-ribos-5-yl)-L-homocysteine + adenine. The catalysed reaction is S-methyl-5'-thioadenosine + H2O = 5-(methylsulfanyl)-D-ribose + adenine. It catalyses the reaction 5'-deoxyadenosine + H2O = 5-deoxy-D-ribose + adenine. It functions in the pathway amino-acid biosynthesis; L-methionine biosynthesis via salvage pathway; S-methyl-5-thio-alpha-D-ribose 1-phosphate from S-methyl-5'-thioadenosine (hydrolase route): step 1/2. Functionally, catalyzes the irreversible cleavage of the glycosidic bond in both 5'-methylthioadenosine (MTA) and S-adenosylhomocysteine (SAH/AdoHcy) to adenine and the corresponding thioribose, 5'-methylthioribose and S-ribosylhomocysteine, respectively. Also cleaves 5'-deoxyadenosine, a toxic by-product of radical S-adenosylmethionine (SAM) enzymes, into 5-deoxyribose and adenine. The sequence is that of 5'-methylthioadenosine/S-adenosylhomocysteine nucleosidase from Bacillus subtilis (strain 168).